Here is a 160-residue protein sequence, read N- to C-terminus: Single-stranded DNA-binding protein 3 (160 aa).

An SSB domain is found at 2–104 (MNRVVLVGRL…IVAESVQFLE (103 aa)). Residues 106–133 (KQNGAGGSTSNNNQSETNYSNDNKTSSY) are compositionally biased toward polar residues. Residues 106–160 (KQNGAGGSTSNNNQSETNYSNDNKTSSYRADRSQNGDSFANEGAPVDINPDDLPF) are disordered.

Homotetramer.

This Listeria innocua serovar 6a (strain ATCC BAA-680 / CLIP 11262) protein is Single-stranded DNA-binding protein 3 (ssb3).